The sequence spans 172 residues: Adenine phosphoribosyltransferase (172 aa).

Belongs to the purine/pyrimidine phosphoribosyltransferase family. Homodimer.

The protein localises to the cytoplasm. The enzyme catalyses AMP + diphosphate = 5-phospho-alpha-D-ribose 1-diphosphate + adenine. It participates in purine metabolism; AMP biosynthesis via salvage pathway; AMP from adenine: step 1/1. Functionally, catalyzes a salvage reaction resulting in the formation of AMP, that is energically less costly than de novo synthesis. The sequence is that of Adenine phosphoribosyltransferase from Clostridium botulinum (strain Loch Maree / Type A3).